Reading from the N-terminus, the 624-residue chain is Chromosomal replication initiator protein DnaA (624 aa).

Residues 1 to 99 (MADVPADLAA…SAGEPPSPPA (99 aa)) are domain I, interacts with DnaA modulators. Residues 88–284 (DDSAGEPPSP…APGPGEPHAR (197 aa)) are disordered. The domain II stretch occupies residues 100–283 (PPMHQSHQSQ…PAPGPGEPHA (184 aa)). The span at 102 to 112 (MHQSHQSQQGH) shows a compositional bias: low complexity. 2 stretches are compositionally biased toward basic and acidic residues: residues 118–141 (QRDDAPRGDAYDGYGHRPSDDGMP) and 176–206 (GYQDREQPSGEPYRESESYRERENEQYREQA). The span at 250 to 264 (PRQGGHGPGRTGGSV) shows a compositional bias: gly residues. A domain III, AAA+ region region spans residues 284 to 500 (RLNPKYLFDT…GALIRVTAFA (217 aa)). Residues glycine 328, glycine 330, lysine 331, and threonine 332 each coordinate ATP. The interval 501 to 624 (SLNRQPVDLG…TELTNRIKNG (124 aa)) is domain IV, binds dsDNA.

This sequence belongs to the DnaA family. As to quaternary structure, oligomerizes as a right-handed, spiral filament on DNA at oriC.

The protein resides in the cytoplasm. Functionally, plays an essential role in the initiation and regulation of chromosomal replication. ATP-DnaA binds to the origin of replication (oriC) to initiate formation of the DNA replication initiation complex once per cell cycle. Binds the DnaA box (a 9 base pair repeat at the origin) and separates the double-stranded (ds)DNA. Forms a right-handed helical filament on oriC DNA; dsDNA binds to the exterior of the filament while single-stranded (ss)DNA is stabiized in the filament's interior. The ATP-DnaA-oriC complex binds and stabilizes one strand of the AT-rich DNA unwinding element (DUE), permitting loading of DNA polymerase. After initiation quickly degrades to an ADP-DnaA complex that is not apt for DNA replication. Binds acidic phospholipids. The DnaA box consensus is 5'-(T/C)(T/C)(G/AC)TCCACA-3'. The sequence is that of Chromosomal replication initiator protein DnaA from Streptomyces anulatus (Streptomyces chrysomallus).